Reading from the N-terminus, the 174-residue chain is Adipose-secreted signaling protein (174 aa).

A2 bears the N-acetylalanine mark. T147 is subject to Phosphothreonine.

The protein belongs to the ADISSP family. In terms of tissue distribution, expression is adipose-specific and highly brown adipose tissue-enriched.

The protein localises to the secreted. Functionally, adipocyte-secreted protein (adipokine) that acts as a key regulator for white adipose tissue (WAT) thermogenesis and glucose homeostasis at least in part through activation of protein kinase A (PKA). This is Adipose-secreted signaling protein from Mus musculus (Mouse).